Consider the following 399-residue polypeptide: Putative gustatory receptor 59e (399 aa).

Residues 1 to 33 (MDSSYWENLLLTINRFLGVYPSGRVGVLRWLHT) are Cytoplasmic-facing. Residues 34–54 (LWSLFLLMYIWTGSIVKCLEF) traverse the membrane as a helical segment. Residues 55-65 (TVEIPTIEKLL) are Extracellular-facing. A helical transmembrane segment spans residues 66–86 (YLMEFPGNMATIAILVYYAVL). At 87–120 (NRPLAHGAELQIERIITGLKGKAKRLVYKRHGQR) the chain is on the cytoplasmic side. The helical transmembrane segment at 121–141 (TLHLMATTLVFHGLCVLVDVV) threads the bilayer. Residues 142 to 206 (NYDFEFWTTW…RPPQGSTKLD (65 aa)) lie on the Extracellular side of the membrane. The chain crosses the membrane as a helical span at residues 207-227 (ACYESAFAVLVDAGGGSALMI). The Cytoplasmic portion of the chain corresponds to 228–250 (EEMRYTCNLIEQVHSQFLLRFGL). A helical transmembrane segment spans residues 251-271 (YLVLNLLNSLVSICVELYLIF). Over 272–282 (NFFETPLWEES) the chain is Extracellular. A helical membrane pass occupies residues 283 to 303 (VLLVYRLLWLAMHGGRIWFIL). Residues 304–361 (SVNEQILEQKCNLCQLLNELEVCSSRLQRTINRFLLQLQRSIDQPLEACGIVTLDTRS) are Cytoplasmic-facing. The chain crosses the membrane as a helical span at residues 362–382 (LGGFIGVLMAIVIFLIQIGLG). N-linked (GlcNAc...) asparagine glycans are attached at residues Asn-383 and Asn-392. Topologically, residues 383 to 399 (NKSLMGVALNRSNWVYV) are extracellular.

This sequence belongs to the insect chemoreceptor superfamily. Gustatory receptor (GR) family. Gr10a subfamily. Expressed in the adult labellar chemosensory neurons. In larvae, is expressed in neurons of the terminal external chemosensory organ.

The protein resides in the cell membrane. Its function is as follows. Probable gustatory receptor which mediates acceptance or avoidance behavior, depending on its substrates. The sequence is that of Putative gustatory receptor 59e (Gr59e) from Drosophila melanogaster (Fruit fly).